A 183-amino-acid polypeptide reads, in one-letter code: Dual-action ribosomal maturation protein DarP (183 aa).

A disordered region spans residues methionine 1–glutamate 23. A compositionally biased stretch (acidic residues) spans aspartate 7 to glutamate 23.

The protein belongs to the DarP family.

It is found in the cytoplasm. Functionally, member of a network of 50S ribosomal subunit biogenesis factors which assembles along the 30S-50S interface, preventing incorrect 23S rRNA structures from forming. Promotes peptidyl transferase center (PTC) maturation. The sequence is that of Dual-action ribosomal maturation protein DarP from Cronobacter sakazakii (strain ATCC BAA-894) (Enterobacter sakazakii).